The chain runs to 361 residues: Chorismate synthase (361 aa).

2 residues coordinate NADP(+): arginine 48 and arginine 54. FMN is bound by residues arginine 131–serine 133, asparagine 243–alanine 244, glycine 287, lysine 302–serine 306, and arginine 328.

This sequence belongs to the chorismate synthase family. As to quaternary structure, homotetramer. FMNH2 serves as cofactor.

It carries out the reaction 5-O-(1-carboxyvinyl)-3-phosphoshikimate = chorismate + phosphate. Its pathway is metabolic intermediate biosynthesis; chorismate biosynthesis; chorismate from D-erythrose 4-phosphate and phosphoenolpyruvate: step 7/7. In terms of biological role, catalyzes the anti-1,4-elimination of the C-3 phosphate and the C-6 proR hydrogen from 5-enolpyruvylshikimate-3-phosphate (EPSP) to yield chorismate, which is the branch point compound that serves as the starting substrate for the three terminal pathways of aromatic amino acid biosynthesis. This reaction introduces a second double bond into the aromatic ring system. This is Chorismate synthase from Bradyrhizobium sp. (strain BTAi1 / ATCC BAA-1182).